A 295-amino-acid polypeptide reads, in one-letter code: Manganese transport system membrane protein MntD (295 aa).

9 consecutive transmembrane segments (helical) span residues 7-27, 42-62, 63-83, 87-107, 138-158, 174-194, 203-223, 227-247, and 253-273; these read IIATGVLVGVSCGLIGTFLVL, LLGIVGAFLVTGSLDGIYMFI, GAAATGLLTAFLVQLLHSKGV, AAIGVVFTSLFAIGVILLSVY, IGPKAFWMLASVLVLNVVLIS, ALALGIPVLLIHYVQMGMLSL, VGAVLVVAMLIVPPAAAHLLT, LYMLILSALIGGLSAVMGYFF, and VSISGAMAAMTGVCYASAFLF.

This sequence belongs to the ABC-3 integral membrane protein family. As to quaternary structure, the complex is probably composed of two ATP-binding proteins (MntB), two transmembrane proteins (MntC and MntD) and a solute-binding protein (MntA).

It localises to the cell membrane. Functionally, probably part of the ABC transporter complex MntABCD involved in manganese import. Probably responsible for the translocation of the substrate across the membrane. This is Manganese transport system membrane protein MntD from Bacillus subtilis (strain 168).